Consider the following 154-residue polypeptide: Lipoprotein signal peptidase (154 aa).

Transmembrane regions (helical) follow at residues Val-7 to Ile-27, Ile-58 to Val-78, and Asn-88 to Asp-108. Residues Asp-117 and Asp-133 contribute to the active site. The helical transmembrane segment at Ile-128–Ile-148 threads the bilayer.

The protein belongs to the peptidase A8 family.

The protein resides in the cell membrane. The catalysed reaction is Release of signal peptides from bacterial membrane prolipoproteins. Hydrolyzes -Xaa-Yaa-Zaa-|-(S,diacylglyceryl)Cys-, in which Xaa is hydrophobic (preferably Leu), and Yaa (Ala or Ser) and Zaa (Gly or Ala) have small, neutral side chains.. It participates in protein modification; lipoprotein biosynthesis (signal peptide cleavage). Functionally, this protein specifically catalyzes the removal of signal peptides from prolipoproteins. The protein is Lipoprotein signal peptidase of Lactobacillus gasseri (strain ATCC 33323 / DSM 20243 / BCRC 14619 / CIP 102991 / JCM 1131 / KCTC 3163 / NCIMB 11718 / NCTC 13722 / AM63).